Consider the following 276-residue polypeptide: Secreted RxLR effector protein 120 (276 aa).

The signal sequence occupies residues 1-21 (MRGAYYVITALLVVASSQTSA). Positions 48–65 (QSLRGSRDVPDDLAHEER) match the RxLR-dEER motif. Residues 97 to 130 (GKRPRVAEKDALEKASGADEASKKPRNTATDDAF) are disordered. Residues 101-119 (RVAEKDALEKASGADEASK) show a composition bias toward basic and acidic residues.

The protein belongs to the RxLR effector family.

Its subcellular location is the secreted. The protein localises to the host nucleus. Secreted effector that completely suppresses the host cell death induced by cell death-inducing proteins. In Plasmopara viticola (Downy mildew of grapevine), this protein is Secreted RxLR effector protein 120.